Here is a 562-residue protein sequence, read N- to C-terminus: MSENKVLSDLEIAHNATMLPVEAIAERAGINVDALELYGPYKAKINTAKLVLPRGKAPGKVVLVSAMSPTPAGEGKSTTTVGLADSLARAGHKVMIALREPSLGPILGMKGGATGGGYSQVLPMDDINLHFTGDFHAITSANNALMALVDNHIFQGNQLGIDPRRMTFKRVLDMNDRALREVVIGLGGPMQGVPRQDGFDITVASEIMAVFCLATDLDDLRERLGRITFGYTYDRTPVTVSDLGVEGALTMLLKDAIKPNLVQTIAGTPALVHGGPFANIAHGCNSLIATSTAMQLADIVVTEAGFGADLGAEKYMDIKARIAEVAPSAVVVVATIRALKMQGGVPKEKLNEPNVEAVAAGVENLKRHVGNVAKFGISPVVSINKFGSDTPEELEWLLAWCAAEGVEAAVADVWGRGGGGDGGDELAAKVAAALEAPSNFHHLYPLELGVEDKIRTIVQEIYGADGVEFSVPALKRLAEIEKNGWSGLPVCMAKTQYSFTDDASRLGAPKGFRVHVRELIPKTGAGFIVALTGAVMTMPGLPKEPAAMRMDVDADGNPTGLF.

ATP is bound at residue 70-77 (TPAGEGKS).

It belongs to the formate--tetrahydrofolate ligase family.

The catalysed reaction is (6S)-5,6,7,8-tetrahydrofolate + formate + ATP = (6R)-10-formyltetrahydrofolate + ADP + phosphate. The protein operates within one-carbon metabolism; tetrahydrofolate interconversion. This is Formate--tetrahydrofolate ligase from Paenarthrobacter aurescens (strain TC1).